Here is a 71-residue protein sequence, read N- to C-terminus: Small ribosomal subunit protein bS21 (71 aa).

This sequence belongs to the bacterial ribosomal protein bS21 family.

This chain is Small ribosomal subunit protein bS21, found in Buchnera aphidicola subsp. Schizaphis graminum (strain Sg).